The primary structure comprises 196 residues: Phosphoheptose isomerase (196 aa).

Positions 36-196 (MTNCLINGGK…GIDALLLGVE (161 aa)) constitute an SIS domain. 51–53 (NGG) serves as a coordination point for substrate. Zn(2+) is bound by residues His60 and Glu64. Substrate is bound by residues Glu64, 93–94 (ND), 119–121 (STS), Ser124, and Gln174. Gln174 and His182 together coordinate Zn(2+).

The protein belongs to the SIS family. GmhA subfamily. In terms of assembly, homotetramer. Zn(2+) is required as a cofactor.

Its subcellular location is the cytoplasm. The enzyme catalyses 2 D-sedoheptulose 7-phosphate = D-glycero-alpha-D-manno-heptose 7-phosphate + D-glycero-beta-D-manno-heptose 7-phosphate. Its pathway is carbohydrate biosynthesis; D-glycero-D-manno-heptose 7-phosphate biosynthesis; D-glycero-alpha-D-manno-heptose 7-phosphate and D-glycero-beta-D-manno-heptose 7-phosphate from sedoheptulose 7-phosphate: step 1/1. Its function is as follows. Catalyzes the isomerization of sedoheptulose 7-phosphate in D-glycero-D-manno-heptose 7-phosphate. The sequence is that of Phosphoheptose isomerase from Dechloromonas aromatica (strain RCB).